The following is a 226-amino-acid chain: Ribonuclease 3 (226 aa).

Residues L7–N129 form the RNase III domain. E42 contributes to the Mg(2+) binding site. D46 is a catalytic residue. Residues D115 and E118 each contribute to the Mg(2+) site. E118 is a catalytic residue. Residues D156–K226 enclose the DRBM domain.

The protein belongs to the ribonuclease III family. Homodimer. Mg(2+) serves as cofactor.

It is found in the cytoplasm. It catalyses the reaction Endonucleolytic cleavage to 5'-phosphomonoester.. In terms of biological role, digests double-stranded RNA. Involved in the processing of primary rRNA transcript to yield the immediate precursors to the large and small rRNAs (23S and 16S). Processes some mRNAs, and tRNAs when they are encoded in the rRNA operon. Processes pre-crRNA and tracrRNA of type II CRISPR loci if present in the organism. This Shewanella denitrificans (strain OS217 / ATCC BAA-1090 / DSM 15013) protein is Ribonuclease 3.